Reading from the N-terminus, the 331-residue chain is Laforin (331 aa).

Residues 1-124 (MRFRFGVVVP…NNLVDGVYCL (124 aa)) enclose the CBM20 domain. Ser25 is modified (phosphoserine; by AMPK). Residues Trp32, Lys87, 103 to 107 (GPHHD), Asp197, Asp235, and Arg241 each bind substrate. In terms of domain architecture, Tyrosine-protein phosphatase spans 156-323 (HYSRILPNIW…QEDFFQKFGK (168 aa)). The active-site Phosphocysteine intermediate is Cys266. Positions 266–272 (CNAGVGR) match the Glucan phosphatase signature motif CXAGXGR motif. Substrate-binding positions include 267 to 272 (NAGVGR) and Tyr304.

It belongs to the protein-tyrosine phosphatase family. In terms of assembly, homodimer. Interacts with itself. Interacts with PPP1R3B, PPP1R3C, PPP1R3D, HIRIP5, and EPM2AIP1. Binds glycogen and Lafora bodies. Interacts with NHLRC1/malin (via the NHL repeats). Forms a complex with NHLRC1/malin and HSP70. Interacts with PPP1R3D; in the presence of NHLC1/malin the interaction leads to ubiquitination and autophagic degradation of PPP1R3D. Interacts (via the phosphatase domain) with MAPT/Tau; the interaction dephosphorylates MAPT. Isoform 1 and isoform 2 interact to form a heterodimeric complex that lacks phosphatase activity (in vitro). Active phosphatase isoform 7 and isoform 1 interact with each other, but give rise to lower phosphatase activity than isoform 1 or isoform 7 by themselves (in vitro). Active phosphatase isoform 7 and inactive isoform 2 interact with each other, but give rise to lower phosphatase activity than isoform 7 by itself (in vitro). Interacts with PRDM8. Polyubiquitinated by NHLRC1/malin. In terms of processing, phosphorylation on Ser-25 by AMPK affects the phosphatase activity of the enzyme and its ability to homodimerize and interact with NHLRC1, PPP1R3C or PRKAA2. Expressed in heart, skeletal muscle, kidney, pancreas and brain. Isoform 4 is also expressed in the placenta.

It is found in the cytoplasm. The protein localises to the endoplasmic reticulum membrane. The protein resides in the cell membrane. Its subcellular location is the nucleus. It catalyses the reaction O-phospho-L-tyrosyl-[protein] + H2O = L-tyrosyl-[protein] + phosphate. The catalysed reaction is O-phospho-L-seryl-[protein] + H2O = L-seryl-[protein] + phosphate. It carries out the reaction O-phospho-L-threonyl-[protein] + H2O = L-threonyl-[protein] + phosphate. Functionally, plays an important role in preventing glycogen hyperphosphorylation and the formation of insoluble aggregates, via its activity as glycogen phosphatase, and by promoting the ubiquitination of proteins involved in glycogen metabolism via its interaction with the E3 ubiquitin ligase NHLRC1/malin. Shows strong phosphatase activity towards complex carbohydrates in vitro, avoiding glycogen hyperphosphorylation which is associated with reduced branching and formation of insoluble aggregates. Dephosphorylates phosphotyrosine and synthetic substrates, such as para-nitrophenylphosphate (pNPP), and has low activity with phosphoserine and phosphothreonine substrates (in vitro). Has been shown to dephosphorylate MAPT. Forms a complex with NHLRC1/malin and HSP70, which suppresses the cellular toxicity of misfolded proteins by promoting their degradation through the ubiquitin-proteasome system (UPS). Acts as a scaffold protein to facilitate PPP1R3C/PTG ubiquitination by NHLRC1/malin. Also promotes proteasome-independent protein degradation through the macroautophagy pathway. In terms of biological role, does not bind to glycogen. Lacks phosphatase activity and might function as a dominant-negative regulator for the phosphatase activity of isoform 1 and isoform 7. Has phosphatase activity (in vitro). This is Laforin (EPM2A) from Homo sapiens (Human).